The sequence spans 65 residues: Large ribosomal subunit protein bL35 (65 aa).

Positions 1-40 (MPKMKTNSGSKKRFALTGTGKIKRKHAFHSHILTKKSKKR) are disordered. A compositionally biased stretch (basic residues) spans 21 to 40 (KIKRKHAFHSHILTKKSKKR).

This sequence belongs to the bacterial ribosomal protein bL35 family.

The protein is Large ribosomal subunit protein bL35 of Bacteroides fragilis (strain ATCC 25285 / DSM 2151 / CCUG 4856 / JCM 11019 / LMG 10263 / NCTC 9343 / Onslow / VPI 2553 / EN-2).